The chain runs to 600 residues: Elongation factor 4 (600 aa).

In terms of domain architecture, tr-type G spans 5–187; that stretch reads KYIRNFSIIA…AIVNKLPPPK (183 aa). GTP contacts are provided by residues 17–22 and 134–137; these read DHGKST and NKID.

The protein belongs to the TRAFAC class translation factor GTPase superfamily. Classic translation factor GTPase family. LepA subfamily.

It localises to the cell inner membrane. The catalysed reaction is GTP + H2O = GDP + phosphate + H(+). Required for accurate and efficient protein synthesis under certain stress conditions. May act as a fidelity factor of the translation reaction, by catalyzing a one-codon backward translocation of tRNAs on improperly translocated ribosomes. Back-translocation proceeds from a post-translocation (POST) complex to a pre-translocation (PRE) complex, thus giving elongation factor G a second chance to translocate the tRNAs correctly. Binds to ribosomes in a GTP-dependent manner. The chain is Elongation factor 4 from Rickettsia felis (strain ATCC VR-1525 / URRWXCal2) (Rickettsia azadi).